A 166-amino-acid polypeptide reads, in one-letter code: Putative peroxisomal peroxiredoxin (166 aa).

The Thioredoxin domain maps to 5–166 (FPEDVKFLYI…SGVDAVLAAL (162 aa)). The active-site Cysteine sulfenic acid (-SOH) intermediate is Cys-56.

The protein belongs to the peroxiredoxin family. Prx5 subfamily. As to quaternary structure, homodimer; disulfide-linked, upon oxidation.

It carries out the reaction a hydroperoxide + [protein]-dithiol = [protein]-disulfide + an alcohol + H2O. Its function is as follows. Thiol-specific peroxidase that catalyzes the reduction of hydrogen peroxide and organic hydroperoxides to water and alcohols, respectively. Plays a role in cell protection against oxidative stress by detoxifying peroxides and as sensor of hydrogen peroxide-mediated signaling events. This chain is Putative peroxisomal peroxiredoxin, found in Lipomyces kononenkoae (Yeast).